Here is a 453-residue protein sequence, read N- to C-terminus: Tyrosine-protein phosphatase non-receptor type 18 (453 aa).

One can recognise a Tyrosine-protein phosphatase domain in the interval 26 to 291 (LAREFSDIKA…RFLYHTVAQL (266 aa)). Substrate contacts are provided by residues Asp197, 229-235 (CSAGCGR), and Gln276. The active-site Phosphocysteine intermediate is the Cys229. Tyr381 and Tyr419 each carry phosphotyrosine. Residues 384 to 453 (VAPRAQRPVA…RDPPAEWTRV (70 aa)) form a disordered region. Residues 442–453 (GPRDPPAEWTRV) show a composition bias toward basic and acidic residues.

This sequence belongs to the protein-tyrosine phosphatase family. Non-receptor class 4 subfamily. Interacts with PSTPIP1. As to expression, highest expression in bone marrow. Also expressed in kidney, lung, ovary, spleen, thymus and lymph node.

It localises to the nucleus. The protein resides in the cytoplasm. It carries out the reaction O-phospho-L-tyrosyl-[protein] + H2O = L-tyrosyl-[protein] + phosphate. May be involved in growth and differentiation of hematopoietic cells. In Mus musculus (Mouse), this protein is Tyrosine-protein phosphatase non-receptor type 18 (Ptpn18).